Consider the following 130-residue polypeptide: NADH-quinone oxidoreductase subunit A (130 aa).

Helical transmembrane passes span 17 to 37, 74 to 94, and 99 to 119; these read YIFV…MLAL, LVGI…PWAV, and LGPA…VGFV.

This sequence belongs to the complex I subunit 3 family. NDH-1 is composed of 14 different subunits. Subunits NuoA, H, J, K, L, M, N constitute the membrane sector of the complex.

Its subcellular location is the cell inner membrane. The enzyme catalyses a quinone + NADH + 5 H(+)(in) = a quinol + NAD(+) + 4 H(+)(out). NDH-1 shuttles electrons from NADH, via FMN and iron-sulfur (Fe-S) centers, to quinones in the respiratory chain. The immediate electron acceptor for the enzyme in this species is believed to be ubiquinone. Couples the redox reaction to proton translocation (for every two electrons transferred, four hydrogen ions are translocated across the cytoplasmic membrane), and thus conserves the redox energy in a proton gradient. The chain is NADH-quinone oxidoreductase subunit A from Neorickettsia sennetsu (strain ATCC VR-367 / Miyayama) (Ehrlichia sennetsu).